We begin with the raw amino-acid sequence, 333 residues long: Protein-methionine-sulfoxide reductase catalytic subunit MsrP (333 aa).

Positions 1-43 (MSKQRKLTEADVTPESVFYQRRKVLQALGITAASLALPHNAQA) form a signal peptide, tat-type signal. Mo-molybdopterin is bound by residues asparagine 87, 90 to 91 (YE), cysteine 145, threonine 180, asparagine 232, arginine 237, and 248 to 250 (GIK).

This sequence belongs to the MsrP family. Heterodimer of a catalytic subunit (MsrP) and a heme-binding subunit (MsrQ). Requires Mo-molybdopterin as cofactor. In terms of processing, predicted to be exported by the Tat system. The position of the signal peptide cleavage has not been experimentally proven.

Its subcellular location is the periplasm. The catalysed reaction is L-methionyl-[protein] + a quinone + H2O = L-methionyl-(S)-S-oxide-[protein] + a quinol. It catalyses the reaction L-methionyl-[protein] + a quinone + H2O = L-methionyl-(R)-S-oxide-[protein] + a quinol. In terms of biological role, part of the MsrPQ system that repairs oxidized periplasmic proteins containing methionine sulfoxide residues (Met-O), using respiratory chain electrons. Thus protects these proteins from oxidative-stress damage caused by reactive species of oxygen and chlorine generated by the host defense mechanisms. MsrPQ is essential for the maintenance of envelope integrity under bleach stress, rescuing a wide series of structurally unrelated periplasmic proteins from methionine oxidation. The catalytic subunit MsrP is non-stereospecific, being able to reduce both (R-) and (S-) diastereoisomers of methionine sulfoxide. This Serratia proteamaculans (strain 568) protein is Protein-methionine-sulfoxide reductase catalytic subunit MsrP.